Reading from the N-terminus, the 361-residue chain is Alcohol dehydrogenase 9 (361 aa).

Zn(2+) is bound by residues cysteine 51, threonine 53, histidine 73, cysteine 104, cysteine 107, cysteine 110, cysteine 118, and cysteine 167. The an alcohol site is built by threonine 53 and histidine 73. Threonine 53 contributes to the NAD(+) binding site. NAD(+)-binding positions include 192 to 197, lysine 221, 278 to 280, and lysine 356; these read GLGGLG and LGA.

Belongs to the zinc-containing alcohol dehydrogenase family. Class-III subfamily. Homodimer. The cofactor is Zn(2+).

This chain is Alcohol dehydrogenase 9, found in Catharanthus roseus (Madagascar periwinkle).